Reading from the N-terminus, the 242-residue chain is Outer membrane protein class 4 (242 aa).

An N-terminal signal peptide occupies residues 1-22 (MTKQLKLSALFVALLASGTAVA). A run of 7 repeats spans residues 69–70 (AP), 71–72 (EP), 73–74 (EP), 75–76 (EP), 77–78 (EP), 79–80 (AP), and 81–82 (AP). Residues 69-82 (APEPEPEPEPAPAP) form a 7 X 2 AA tandem repeats of X-P region. In terms of domain architecture, OmpA-like spans 92-229 (YVDETISLSA…RVDVKIRSIV (138 aa)). The cysteines at positions 191 and 214 are disulfide-linked.

Belongs to the outer membrane OOP (TC 1.B.6) superfamily.

It is found in the cell outer membrane. The sequence is that of Outer membrane protein class 4 (rmpM) from Neisseria meningitidis serogroup A / serotype 4A (strain DSM 15465 / Z2491).